The sequence spans 590 residues: Probable lysine-specific demethylase 4B (590 aa).

Residues 9-51 (IKVFRPTWEEFKDFPKYVAYMESQGAHKAGLAKVVPPPEWVPR) form the JmjN domain. Tyrosine 130 is a 2-oxoglutarate binding site. Residues 140 to 306 (DTDQDSWNIN…YGKRAVQCTC (167 aa)) form the JmjC domain. Histidine 186 and glutamate 188 together coordinate Fe cation. 2-oxoglutarate-binding residues include asparagine 196 and lysine 204. Residues cysteine 232 and histidine 238 each coordinate Zn(2+). A 2-oxoglutarate-binding site is contributed by lysine 239. Histidine 274 contacts Fe cation. 2 residues coordinate Zn(2+): cysteine 304 and cysteine 306. Disordered regions lie at residues 372–395 (PTKAKSFKERNPDLDLDEIQQNPN) and 417–590 (ATDE…TASP). A compositionally biased stretch (acidic residues) spans 445 to 458 (EYIDDGTEDDDEEE). Positions 480-494 (SKRKTNSRNNRGRSP) are enriched in basic residues. Composition is skewed to low complexity over residues 502 to 513 (ISPASSTSSTSR) and 537 to 571 (TTSPAVSSAATAVKTPTSAVVAGTTSIATTTTPPA).

The protein belongs to the JHDM3 histone demethylase family. The cofactor is Fe(2+).

Its subcellular location is the nucleus. It catalyses the reaction N(6),N(6),N(6)-trimethyl-L-lysyl(9)-[histone H3] + 2 2-oxoglutarate + 2 O2 = N(6)-methyl-L-lysyl(9)-[histone H3] + 2 formaldehyde + 2 succinate + 2 CO2. Probable histone demethylase that specifically demethylates 'Lys-9' and 'Lys-36' residues of histone H3, thereby playing a central role in histone code. Demethylation of Lys residue generates formaldehyde and succinate. This is Probable lysine-specific demethylase 4B (Kdm4B) from Drosophila melanogaster (Fruit fly).